The sequence spans 242 residues: Myogenic factor 6 (242 aa).

Residues 31–63 (SPLYPGSDGTLSPCQDQMPPEAGSDSSGEEHVL) form a disordered region. The bHLH domain maps to 93-144 (DRRKAATLRERRRLKKINEAFEALKRRTVANPNQRLPKVEILRSAINYIERL).

As to quaternary structure, efficient DNA binding requires dimerization with another bHLH protein. Interacts with CSRP3.

It localises to the nucleus. In terms of biological role, involved in muscle differentiation (myogenic factor). Induces fibroblasts to differentiate into myoblasts. Probable sequence specific DNA-binding protein. The polypeptide is Myogenic factor 6 (MYF6) (Bos taurus (Bovine)).